Consider the following 539-residue polypeptide: Alpha-aminoadipic semialdehyde dehydrogenase (539 aa).

Residues 1-26 (MLRLARPLCVQTVKASKLSRLWSRPA) constitute a mitochondrion transit peptide. Lysine 86, lysine 94, and lysine 97 each carry N6-acetyllysine; alternate. 3 positions are modified to N6-succinyllysine; alternate: lysine 86, lysine 94, and lysine 97. NAD(+) is bound by residues 192-194 (TAF), lysine 218, 258-259 (GT), 274-275 (GS), 274-279 (GSTQVG), and 296-297 (EL). The active-site Proton acceptor is the glutamate 296. Catalysis depends on cysteine 330, which acts as the Nucleophile. Threonine 331 contributes to the (S)-2-amino-6-oxohexanoate binding site. Glutamate 427 provides a ligand contact to NAD(+). Residue lysine 462 is modified to N6-acetyllysine. Glycine 489 and alanine 490 together coordinate (S)-2-amino-6-oxohexanoate. The residue at position 500 (lysine 500) is an N6-acetyllysine. Lysine 537 carries the N6-succinyllysine modification.

Belongs to the aldehyde dehydrogenase family. As to quaternary structure, homotetramer. Abundant in kidney, liver, cochlea and outer hair cells but not inner hair cells or vestibular type I hair cells. Very low levels in lung, brain, intestine and pancreas.

The protein localises to the cytoplasm. It localises to the cytosol. Its subcellular location is the nucleus. The protein resides in the mitochondrion. The enzyme catalyses nonanal + NAD(+) + H2O = nonanoate + NADH + 2 H(+). The catalysed reaction is (S)-2-amino-6-oxohexanoate + NAD(+) + H2O = L-2-aminoadipate + NADH + 2 H(+). It catalyses the reaction betaine aldehyde + NAD(+) + H2O = glycine betaine + NADH + 2 H(+). It carries out the reaction an aldehyde + NAD(+) + H2O = a carboxylate + NADH + 2 H(+). The enzyme catalyses hexanal + NAD(+) + H2O = hexanoate + NADH + 2 H(+). The catalysed reaction is octanal + NAD(+) + H2O = octanoate + NADH + 2 H(+). It catalyses the reaction (E)-non-2-enal + NAD(+) + H2O = (E)-non-2-enoate + NADH + 2 H(+). It carries out the reaction (E)-4-hydroxynon-2-enal + NAD(+) + H2O = (E)-4-hydroxynon-2-enoate + NADH + 2 H(+). The protein operates within amine and polyamine biosynthesis; betaine biosynthesis via choline pathway; betaine from betaine aldehyde: step 1/1. Its function is as follows. Multifunctional enzyme mediating important protective effects. Metabolizes betaine aldehyde to betaine, an important cellular osmolyte and methyl donor. Protects cells from oxidative stress by metabolizing a number of lipid peroxidation-derived aldehydes. Involved in lysine catabolism. In Rattus norvegicus (Rat), this protein is Alpha-aminoadipic semialdehyde dehydrogenase.